A 49-amino-acid polypeptide reads, in one-letter code: DNA-directed RNA polymerase subunit Rpo12 (49 aa).

Positions 11, 27, and 30 each coordinate Zn(2+).

The protein belongs to the archaeal Rpo12/eukaryotic RPC10 RNA polymerase subunit family. In terms of assembly, part of the RNA polymerase complex. Zn(2+) serves as cofactor.

Its subcellular location is the cytoplasm. It catalyses the reaction RNA(n) + a ribonucleoside 5'-triphosphate = RNA(n+1) + diphosphate. In terms of biological role, DNA-dependent RNA polymerase (RNAP) catalyzes the transcription of DNA into RNA using the four ribonucleoside triphosphates as substrates. The polypeptide is DNA-directed RNA polymerase subunit Rpo12 (Pyrococcus horikoshii (strain ATCC 700860 / DSM 12428 / JCM 9974 / NBRC 100139 / OT-3)).